The primary structure comprises 146 residues: Ribosome-binding factor A (146 aa).

The segment at 127–146 (EFAGEADPYKKPEDDEAAES) is disordered.

It belongs to the RbfA family. As to quaternary structure, monomer. Binds 30S ribosomal subunits, but not 50S ribosomal subunits or 70S ribosomes.

It is found in the cytoplasm. Functionally, one of several proteins that assist in the late maturation steps of the functional core of the 30S ribosomal subunit. Associates with free 30S ribosomal subunits (but not with 30S subunits that are part of 70S ribosomes or polysomes). Required for efficient processing of 16S rRNA. May interact with the 5'-terminal helix region of 16S rRNA. In Renibacterium salmoninarum (strain ATCC 33209 / DSM 20767 / JCM 11484 / NBRC 15589 / NCIMB 2235), this protein is Ribosome-binding factor A.